A 547-amino-acid polypeptide reads, in one-letter code: MASKEIKFGRTAREKMLRGVDILADAVKVTLGPKGRNVIIDKSFGAPRITKDGVSVAKEIELEDKFENMGAQMVREVASKTNDIAGDGTTTATVLAQAIVREGNKAVAAGMNPMDLKRGIDLAVADVVKDLQAKAKKISTSEEVAQVGTISANGDKQVGLDIAEAMQKVGNEGVITVEEAKTAETELEVVEGMQFDRGYLSPYFVTNPEKMIADLEDVFILLHEKKLSNLQSMLPVLEAVVQTGKPLLIVAEDVEGEALATLVVNKLRGGLKIAAVKAPGFGDRRKAMLEDIAILTGGTVISEDLGIKLESVTLDMLGRAKKVSISKENTTIVDGSGAKTDIEGRVAQIKAQIEETTSDYDREKLQERLAKLAGGVAVIRVGGSTEVEVKEKKDRIDDALNATRAAVQEGIVPGGGIALLRSSTKITVKGANDDQEAGINIVRRALQSLVRQIAENAGDEASIVVGKVLDKNEDNFGYNAQTSEYGDMIAMGIVDPLKVVRTALQNAASVASLLITTEAMIAELPKKESAGGGMPGGMGGMGGMDMM.

Residues 30 to 33 (TLGP), Lys51, 87 to 91 (DGTTT), Gly415, and Asp495 contribute to the ATP site.

This sequence belongs to the chaperonin (HSP60) family. As to quaternary structure, forms a cylinder of 14 subunits composed of two heptameric rings stacked back-to-back. Interacts with the co-chaperonin GroES.

Its subcellular location is the cytoplasm. The enzyme catalyses ATP + H2O + a folded polypeptide = ADP + phosphate + an unfolded polypeptide.. In terms of biological role, together with its co-chaperonin GroES, plays an essential role in assisting protein folding. The GroEL-GroES system forms a nano-cage that allows encapsulation of the non-native substrate proteins and provides a physical environment optimized to promote and accelerate protein folding. This Rhizobium johnstonii (strain DSM 114642 / LMG 32736 / 3841) (Rhizobium leguminosarum bv. viciae) protein is Chaperonin GroEL 1.